The following is a 238-amino-acid chain: uncharacterized protein (238 aa).

Transmembrane regions (helical) follow at residues Ile-24–Asn-44, Gly-78–Leu-98, Ile-109–Val-129, Phe-156–Ile-176, Met-188–Pro-208, and Ile-216–Leu-236.

Belongs to the TatC family.

It localises to the plastid. Its subcellular location is the chloroplast membrane. This is an uncharacterized protein from Gracilaria tenuistipitata var. liui (Red alga).